A 448-amino-acid chain; its full sequence is Trigger factor (448 aa).

In terms of domain architecture, PPIase FKBP-type spans 172–257 (GDRVTVDFVG…MKKIEWPHMP (86 aa)).

This sequence belongs to the FKBP-type PPIase family. Tig subfamily.

Its subcellular location is the cytoplasm. It carries out the reaction [protein]-peptidylproline (omega=180) = [protein]-peptidylproline (omega=0). Involved in protein export. Acts as a chaperone by maintaining the newly synthesized protein in an open conformation. Functions as a peptidyl-prolyl cis-trans isomerase. In Burkholderia vietnamiensis (strain G4 / LMG 22486) (Burkholderia cepacia (strain R1808)), this protein is Trigger factor.